We begin with the raw amino-acid sequence, 95 residues long: MLKPLGNRVIIERKEQEQTTKSGIVLTDSAKEKSNEGIVVAVGTGRVLDNGEKVAPEVKEGDRVVFQEYAGSEVKRGDKTYLILNVEDLLAIIED.

This sequence belongs to the GroES chaperonin family. Heptamer of 7 subunits arranged in a ring. Interacts with the chaperonin GroEL.

The protein localises to the cytoplasm. Functionally, together with the chaperonin GroEL, plays an essential role in assisting protein folding. The GroEL-GroES system forms a nano-cage that allows encapsulation of the non-native substrate proteins and provides a physical environment optimized to promote and accelerate protein folding. GroES binds to the apical surface of the GroEL ring, thereby capping the opening of the GroEL channel. This is Co-chaperonin GroES from Staphylococcus haemolyticus (strain JCSC1435).